The following is a 435-amino-acid chain: Legumain (435 aa).

Positions 1–17 (MTWRVAVLLSLVLGAGA) are cleaved as a signal peptide. N-linked (GlcNAc...) asparagine glycosylation is present at asparagine 93. Histidine 150 is a catalytic residue. The N-linked (GlcNAc...) asparagine glycan is linked to asparagine 169. Catalysis depends on cysteine 191, which acts as the Nucleophile. Asparagine 215, asparagine 265, and asparagine 274 each carry an N-linked (GlcNAc...) asparagine glycan. The propeptide occupies 326 to 435 (NMKESQVLVG…AMDKVCLSHY (110 aa)). 2 disulfides stabilise this stretch: cysteine 380-cysteine 414 and cysteine 392-cysteine 431.

Belongs to the peptidase C13 family. Homodimer before autocatalytic removal of the propeptide. Monomer after autocatalytic processing. May interact with integrins. In terms of processing, activated by autocatalytic processing at pH 4. As to expression, detected in kidney cortex (at protein level).

It localises to the lysosome. It carries out the reaction Hydrolysis of proteins and small molecule substrates at -Asn-|-Xaa- bonds.. Functionally, has a strict specificity for hydrolysis of asparaginyl bonds. Can also cleave aspartyl bonds slowly, especially under acidic conditions. Involved in the processing of proteins for MHC class II antigen presentation in the lysosomal/endosomal system. Also involved in MHC class I antigen presentation in cross-presenting dendritic cells by mediating cleavage and maturation of Perforin-2 (MPEG1), thereby promoting antigen translocation in the cytosol. Required for normal lysosomal protein degradation in renal proximal tubules. Required for normal degradation of internalized EGFR. Plays a role in the regulation of cell proliferation via its role in EGFR degradation. The chain is Legumain (Lgmn) from Rattus norvegicus (Rat).